Here is a 952-residue protein sequence, read N- to C-terminus: Glycine dehydrogenase (decarboxylating) (952 aa).

At lysine 703 the chain carries N6-(pyridoxal phosphate)lysine.

Belongs to the GcvP family. In terms of assembly, the glycine cleavage system is composed of four proteins: P, T, L and H. Requires pyridoxal 5'-phosphate as cofactor.

The enzyme catalyses N(6)-[(R)-lipoyl]-L-lysyl-[glycine-cleavage complex H protein] + glycine + H(+) = N(6)-[(R)-S(8)-aminomethyldihydrolipoyl]-L-lysyl-[glycine-cleavage complex H protein] + CO2. The glycine cleavage system catalyzes the degradation of glycine. The P protein binds the alpha-amino group of glycine through its pyridoxal phosphate cofactor; CO(2) is released and the remaining methylamine moiety is then transferred to the lipoamide cofactor of the H protein. The chain is Glycine dehydrogenase (decarboxylating) from Mycolicibacterium gilvum (strain PYR-GCK) (Mycobacterium gilvum (strain PYR-GCK)).